Consider the following 208-residue polypeptide: Outer-membrane lipoprotein LolB (208 aa).

Residues 1–23 (MKPIQKLSLFRLLPLSCVLLLTA) form the signal peptide. C24 carries N-palmitoyl cysteine lipidation. C24 carries the S-diacylglycerol cysteine lipid modification.

The protein belongs to the LolB family. As to quaternary structure, monomer.

The protein resides in the cell outer membrane. Functionally, plays a critical role in the incorporation of lipoproteins in the outer membrane after they are released by the LolA protein. This chain is Outer-membrane lipoprotein LolB, found in Photorhabdus laumondii subsp. laumondii (strain DSM 15139 / CIP 105565 / TT01) (Photorhabdus luminescens subsp. laumondii).